The chain runs to 369 residues: Cobalt-precorrin-5B C(1)-methyltransferase (369 aa).

It belongs to the CbiD family.

The enzyme catalyses Co-precorrin-5B + S-adenosyl-L-methionine = Co-precorrin-6A + S-adenosyl-L-homocysteine. It functions in the pathway cofactor biosynthesis; adenosylcobalamin biosynthesis; cob(II)yrinate a,c-diamide from sirohydrochlorin (anaerobic route): step 6/10. Catalyzes the methylation of C-1 in cobalt-precorrin-5B to form cobalt-precorrin-6A. The chain is Cobalt-precorrin-5B C(1)-methyltransferase from Brucella melitensis biotype 1 (strain ATCC 23456 / CCUG 17765 / NCTC 10094 / 16M).